Consider the following 145-residue polypeptide: D-aminoacyl-tRNA deacylase (145 aa).

Residues 137-138 (GP) carry the Gly-cisPro motif, important for rejection of L-amino acids motif.

The protein belongs to the DTD family. Homodimer.

It localises to the cytoplasm. It carries out the reaction glycyl-tRNA(Ala) + H2O = tRNA(Ala) + glycine + H(+). The catalysed reaction is a D-aminoacyl-tRNA + H2O = a tRNA + a D-alpha-amino acid + H(+). Its function is as follows. An aminoacyl-tRNA editing enzyme that deacylates mischarged D-aminoacyl-tRNAs. Also deacylates mischarged glycyl-tRNA(Ala), protecting cells against glycine mischarging by AlaRS. Acts via tRNA-based rather than protein-based catalysis; rejects L-amino acids rather than detecting D-amino acids in the active site. By recycling D-aminoacyl-tRNA to D-amino acids and free tRNA molecules, this enzyme counteracts the toxicity associated with the formation of D-aminoacyl-tRNA entities in vivo and helps enforce protein L-homochirality. The sequence is that of D-aminoacyl-tRNA deacylase from Shewanella frigidimarina (strain NCIMB 400).